The chain runs to 556 residues: Urocanate hydratase (556 aa).

NAD(+)-binding positions include 52–53, Gln-130, 176–178, Glu-196, Arg-201, 242–243, 263–267, 273–274, and Tyr-322; these read GG, GMG, NA, QTSAH, and YL. Cys-410 is an active-site residue. Residue Gly-492 coordinates NAD(+).

Belongs to the urocanase family. NAD(+) is required as a cofactor.

It is found in the cytoplasm. The catalysed reaction is 4-imidazolone-5-propanoate = trans-urocanate + H2O. The protein operates within amino-acid degradation; L-histidine degradation into L-glutamate; N-formimidoyl-L-glutamate from L-histidine: step 2/3. In terms of biological role, catalyzes the conversion of urocanate to 4-imidazolone-5-propionate. This is Urocanate hydratase from Shewanella oneidensis (strain ATCC 700550 / JCM 31522 / CIP 106686 / LMG 19005 / NCIMB 14063 / MR-1).